The primary structure comprises 210 residues: Na(+)-translocating NADH-quinone reductase subunit D (210 aa).

5 helical membrane passes run 42–62, 72–92, 103–123, 131–151, and 178–198; these read FVMTLAVTFVTALSNFSVSLI, IIVQMAIIASLVIVVDQVLKA, VFVGLIITNCIVMGRAEAFAM, LIDGIGNGLGYGFVLITVGFF, and NGLMLLAPSAFFLIGFLIWVI.

This sequence belongs to the NqrDE/RnfAE family. Composed of six subunits; NqrA, NqrB, NqrC, NqrD, NqrE and NqrF.

It is found in the cell inner membrane. It carries out the reaction a ubiquinone + n Na(+)(in) + NADH + H(+) = a ubiquinol + n Na(+)(out) + NAD(+). Its function is as follows. NQR complex catalyzes the reduction of ubiquinone-1 to ubiquinol by two successive reactions, coupled with the transport of Na(+) ions from the cytoplasm to the periplasm. NqrA to NqrE are probably involved in the second step, the conversion of ubisemiquinone to ubiquinol. The chain is Na(+)-translocating NADH-quinone reductase subunit D from Vibrio campbellii (strain ATCC BAA-1116).